A 31-amino-acid polypeptide reads, in one-letter code: U14-ctenitoxin-Co1c (31 aa).

Expressed by the venom gland.

Its subcellular location is the secreted. Not toxic to mice by intracerebroventricular injection. In Ctenus ornatus (Brazilian spider), this protein is U14-ctenitoxin-Co1c.